We begin with the raw amino-acid sequence, 585 residues long: Glutamate decarboxylase 2 (585 aa).

Positions 1-14 are enriched in low complexity; that stretch reads MASPGSGFWSFGSE. The tract at residues 1-24 is disordered; it reads MASPGSGFWSFGSEDGSGDSENPG. Phosphoserine occurs at positions 3, 6, 10, and 13. Residues cysteine 30 and cysteine 45 are each lipidated (S-palmitoyl cysteine). 181–183 contacts substrate; that stretch reads QLS. The residue at position 396 (lysine 396) is an N6-(pyridoxal phosphate)lysine. Arginine 558 contacts substrate.

It belongs to the group II decarboxylase family. As to quaternary structure, homodimer. Requires pyridoxal 5'-phosphate as cofactor. Post-translationally, phosphorylated; which does not affect kinetic parameters or subcellular location. In terms of processing, palmitoylated; which is required for presynaptic clustering.

The protein resides in the cytoplasm. It is found in the cytosol. Its subcellular location is the cytoplasmic vesicle. The protein localises to the presynaptic cell membrane. It localises to the golgi apparatus membrane. The enzyme catalyses L-glutamate + H(+) = 4-aminobutanoate + CO2. Functionally, catalyzes the production of GABA. The protein is Glutamate decarboxylase 2 of Homo sapiens (Human).